A 282-amino-acid polypeptide reads, in one-letter code: Bifunctional protein FolD (282 aa).

Residues 164–166 (GAS), I189, and I230 contribute to the NADP(+) site.

The protein belongs to the tetrahydrofolate dehydrogenase/cyclohydrolase family. In terms of assembly, homodimer.

It catalyses the reaction (6R)-5,10-methylene-5,6,7,8-tetrahydrofolate + NADP(+) = (6R)-5,10-methenyltetrahydrofolate + NADPH. It carries out the reaction (6R)-5,10-methenyltetrahydrofolate + H2O = (6R)-10-formyltetrahydrofolate + H(+). The protein operates within one-carbon metabolism; tetrahydrofolate interconversion. Catalyzes the oxidation of 5,10-methylenetetrahydrofolate to 5,10-methenyltetrahydrofolate and then the hydrolysis of 5,10-methenyltetrahydrofolate to 10-formyltetrahydrofolate. In Campylobacter jejuni subsp. jejuni serotype O:2 (strain ATCC 700819 / NCTC 11168), this protein is Bifunctional protein FolD.